The sequence spans 281 residues: Pantothenate synthetase (281 aa).

30-37 (MGNLHLGH) serves as a coordination point for ATP. H37 (proton donor) is an active-site residue. (R)-pantoate is bound at residue Q61. Position 61 (Q61) interacts with beta-alanine. Residue 149–152 (GRKD) coordinates ATP. Q155 provides a ligand contact to (R)-pantoate. ATP is bound by residues I178 and 186 to 189 (MSSR).

This sequence belongs to the pantothenate synthetase family. As to quaternary structure, homodimer.

The protein resides in the cytoplasm. It catalyses the reaction (R)-pantoate + beta-alanine + ATP = (R)-pantothenate + AMP + diphosphate + H(+). It functions in the pathway cofactor biosynthesis; (R)-pantothenate biosynthesis; (R)-pantothenate from (R)-pantoate and beta-alanine: step 1/1. Catalyzes the condensation of pantoate with beta-alanine in an ATP-dependent reaction via a pantoyl-adenylate intermediate. This Shewanella woodyi (strain ATCC 51908 / MS32) protein is Pantothenate synthetase.